Reading from the N-terminus, the 638-residue chain is Growth hormone receptor (638 aa).

The first 18 residues, 1–18 (MDLWQLLLTLALAGSSDA), serve as a signal peptide directing secretion. Residues 19–264 (FSGSEPTAAI…NQFTCEEDFY (246 aa)) lie on the Extracellular side of the membrane. Residue Asn-46 is glycosylated (N-linked (GlcNAc...) asparagine). Intrachain disulfides connect Cys-56-Cys-66 and Cys-101-Cys-112. Residue Asn-115 is glycosylated (N-linked (GlcNAc...) asparagine). Cys-126 and Cys-140 are joined by a disulfide. One can recognise a Fibronectin type-III domain in the interval 151–254 (PPIALNWTLL…EVLYVTLPQM (104 aa)). N-linked (GlcNAc...) asparagine glycosylation is found at Asn-156, Asn-161, and Asn-200. Positions 240–244 (YGEFS) match the WSXWS motif motif. Residues 265–288 (FPWLLIIIFGIFGLTVMLFVFLFS) traverse the membrane as a helical segment. The Cytoplasmic segment spans residues 289–638 (KQQRIKMLIL…STDQLNKIMP (350 aa)). Positions 294-379 (KMLILPPVPV…HQKSHSNLGV (86 aa)) are required for JAK2 binding. The Box 1 motif signature appears at 297–305 (ILPPVPVPK). The short motif at 340-349 (DSWVEFIELD) is the UbE motif element. Residue Ser-341 is modified to Phosphoserine. A disordered region spans residues 353 to 388 (PDEKNEGSDTDRLLSSDHQKSHSNLGVKDGDSGRTS). Over residues 356–372 (KNEGSDTDRLLSSDHQK) the composition is skewed to basic and acidic residues. A phosphotyrosine mark is found at Tyr-487 and Tyr-595.

This sequence belongs to the type I cytokine receptor family. Type 1 subfamily. In terms of assembly, on growth hormone (GH) binding, forms homodimers and binds JAK2 via a box 1-containing domain. In terms of processing, the soluble form (GHBP) is produced by phorbol ester-promoted proteolytic cleavage at the cell surface (shedding) by ADAM17/TACE. Shedding is inhibited by growth hormone (GH) binding to the receptor probably due to a conformational change in GHR rendering the receptor inaccessible to ADAM17. On GH binding, phosphorylated on tyrosine residues in the cytoplasmic domain by JAK2. Post-translationally, ubiquitinated by the ECS(SOCS2) complex following ligand-binding and phosphorylation by JAK2, leading to its degradation by the proteasome. Regulation by the ECS(SOCS2) complex acts as a negative feedback loop of growth hormone receptor signaling. Ubiquitination is not sufficient for GHR internalization.

The protein localises to the cell membrane. Its subcellular location is the secreted. Receptor for pituitary gland growth hormone (GH1) involved in regulating postnatal body growth. On ligand binding, couples to the JAK2/STAT5 pathway. Its function is as follows. The soluble form (GHBP) acts as a reservoir of growth hormone in plasma and may be a modulator/inhibitor of GH signaling. The polypeptide is Growth hormone receptor (GHR) (Macaca mulatta (Rhesus macaque)).